The sequence spans 330 residues: Probable UDP-3-O-acylglucosamine N-acyltransferase 1, mitochondrial (330 aa).

Residues 1-52 (MANSLRTLFSVSTHGVFLNKRSSYRVRKVFVGMPLRICSEIPRFVSVSCIRS) constitute a mitochondrion transit peptide. UDP-N-acetyl-alpha-D-glucosamine is bound at residue 160–162 (FGF). Residues aspartate 210 and glutamine 214 each contribute to the hexadecanoate site. Histidine 217 acts as the Proton acceptor in catalysis. Asparagine 218, serine 236, and histidine 254 together coordinate UDP-N-acetyl-alpha-D-glucosamine.

It belongs to the transferase hexapeptide repeat family. LpxD subfamily. Homotrimer.

The protein localises to the mitochondrion. The catalysed reaction is a UDP-3-O-[(3R)-3-hydroxyacyl]-alpha-D-glucosamine + a (3R)-hydroxyacyl-[ACP] = a UDP-2-N,3-O-bis[(3R)-3-hydroxyacyl]-alpha-D-glucosamine + holo-[ACP] + H(+). The protein operates within glycolipid biosynthesis; lipid IV(A) biosynthesis; lipid IV(A) from (3R)-3-hydroxytetradecanoyl-[acyl-carrier-protein] and UDP-N-acetyl-alpha-D-glucosamine: step 3/6. Its function is as follows. Involved in the biosynthesis of lipid A, a phosphorylated glycolipid that in bacteria anchors the lipopolysaccharide to the outer membrane of the cell. Lipid A-like molecules in plants may serve as structural components of the outer membranes of mitochondria and/or chloroplasts, or may be involved in signal transduction or plant defense responses. The chain is Probable UDP-3-O-acylglucosamine N-acyltransferase 1, mitochondrial (LPXD1) from Arabidopsis thaliana (Mouse-ear cress).